Consider the following 288-residue polypeptide: ATP synthase gamma chain (288 aa).

It belongs to the ATPase gamma chain family. F-type ATPases have 2 components, CF(1) - the catalytic core - and CF(0) - the membrane proton channel. CF(1) has five subunits: alpha(3), beta(3), gamma(1), delta(1), epsilon(1). CF(0) has three main subunits: a, b and c.

The protein resides in the cell inner membrane. Functionally, produces ATP from ADP in the presence of a proton gradient across the membrane. The gamma chain is believed to be important in regulating ATPase activity and the flow of protons through the CF(0) complex. The sequence is that of ATP synthase gamma chain from Legionella pneumophila (strain Corby).